Here is a 391-residue protein sequence, read N- to C-terminus: NADH-quinone oxidoreductase subunit D (391 aa).

It belongs to the complex I 49 kDa subunit family. In terms of assembly, NDH-1 is composed of 14 different subunits. Subunits NuoB, C, D, E, F, and G constitute the peripheral sector of the complex.

It is found in the cell inner membrane. The enzyme catalyses a quinone + NADH + 5 H(+)(in) = a quinol + NAD(+) + 4 H(+)(out). NDH-1 shuttles electrons from NADH, via FMN and iron-sulfur (Fe-S) centers, to quinones in the respiratory chain. The immediate electron acceptor for the enzyme in this species is believed to be ubiquinone. Couples the redox reaction to proton translocation (for every two electrons transferred, four hydrogen ions are translocated across the cytoplasmic membrane), and thus conserves the redox energy in a proton gradient. This is NADH-quinone oxidoreductase subunit D from Rickettsia canadensis (strain McKiel).